The sequence spans 639 residues: Tetracycline resistance protein TetW (639 aa).

The tr-type G domain maps to 1 to 243; that stretch reads MKIINIGILA…VTGLFQPIGE (243 aa). GTP contacts are provided by residues 10 to 17, 74 to 78, and 128 to 131; these read AHVDAGKT, DTPGH, and NKID.

It belongs to the TRAFAC class translation factor GTPase superfamily. Classic translation factor GTPase family. TetM/TetO subfamily.

In terms of biological role, abolishes the inhibitory effect of tetracyclin on protein synthesis by a non-covalent modification of the ribosomes. This Butyrivibrio fibrisolvens protein is Tetracycline resistance protein TetW (tetW).